The primary structure comprises 734 residues: Photosystem I P700 chlorophyll a apoprotein A2 (734 aa).

The next 8 helical transmembrane spans lie at 46–69 (IFAS…FHVA), 135–158 (LYTG…LHLQ), 175–199 (LNHH…HVAI), 273–291 (MAHH…GHMY), 330–353 (IHFQ…QHMY), 369–395 (AALY…IFFI), 417–439 (AIIS…LYVH), and 517–535 (FLVH…LILV). [4Fe-4S] cluster contacts are provided by Cys559 and Cys568. The next 2 helical transmembrane spans lie at 575–596 (AFYL…YWHW) and 643–665 (LSVW…MFLI). Residues His654, Met662, and Tyr670 each coordinate chlorophyll a. Trp671 is a phylloquinone binding site. A helical membrane pass occupies residues 707–727 (LVGLAHFSVGYIFTYAAFLIA).

Belongs to the PsaA/PsaB family. In terms of assembly, the PsaA/B heterodimer binds the P700 chlorophyll special pair and subsequent electron acceptors. PSI consists of a core antenna complex that captures photons, and an electron transfer chain that converts photonic excitation into a charge separation. The eukaryotic PSI reaction center is composed of at least 11 subunits. P700 is a chlorophyll a/chlorophyll a' dimer, A0 is one or more chlorophyll a, A1 is one or both phylloquinones and FX is a shared 4Fe-4S iron-sulfur center. serves as cofactor.

Its subcellular location is the plastid. It localises to the chloroplast thylakoid membrane. It carries out the reaction reduced [plastocyanin] + hnu + oxidized [2Fe-2S]-[ferredoxin] = oxidized [plastocyanin] + reduced [2Fe-2S]-[ferredoxin]. PsaA and PsaB bind P700, the primary electron donor of photosystem I (PSI), as well as the electron acceptors A0, A1 and FX. PSI is a plastocyanin-ferredoxin oxidoreductase, converting photonic excitation into a charge separation, which transfers an electron from the donor P700 chlorophyll pair to the spectroscopically characterized acceptors A0, A1, FX, FA and FB in turn. Oxidized P700 is reduced on the lumenal side of the thylakoid membrane by plastocyanin. The polypeptide is Photosystem I P700 chlorophyll a apoprotein A2 (Triticum aestivum (Wheat)).